Consider the following 430-residue polypeptide: Ribosomal protein uS12 methylthiotransferase RimO (430 aa).

Residues 1–116 (MRVGIKVLGC…IANALEKGTD (116 aa)) form the MTTase N-terminal domain. Residues cysteine 10, cysteine 46, cysteine 79, cysteine 148, cysteine 152, and cysteine 155 each contribute to the [4Fe-4S] cluster site. Residues 134-365 (LEERPYAYVK…LLQAEISNSR (232 aa)) enclose the Radical SAM core domain. A TRAM domain is found at 367 to 430 (DRFIGRKLKF…DEYDMWGSVT (64 aa)).

Belongs to the methylthiotransferase family. RimO subfamily. The cofactor is [4Fe-4S] cluster.

Its subcellular location is the cytoplasm. The catalysed reaction is L-aspartate(89)-[ribosomal protein uS12]-hydrogen + (sulfur carrier)-SH + AH2 + 2 S-adenosyl-L-methionine = 3-methylsulfanyl-L-aspartate(89)-[ribosomal protein uS12]-hydrogen + (sulfur carrier)-H + 5'-deoxyadenosine + L-methionine + A + S-adenosyl-L-homocysteine + 2 H(+). Catalyzes the methylthiolation of an aspartic acid residue of ribosomal protein uS12. In Thermotoga sp. (strain RQ2), this protein is Ribosomal protein uS12 methylthiotransferase RimO.